Consider the following 268-residue polypeptide: Small ribosomal subunit protein eS1 (268 aa).

The interval 1 to 21 (MAVGKNKGLSKGGKKGGKKKV) is disordered.

This sequence belongs to the eukaryotic ribosomal protein eS1 family. In terms of assembly, component of the small ribosomal subunit. Mature ribosomes consist of a small (40S) and a large (60S) subunit. The 40S subunit contains about 33 different proteins and 1 molecule of RNA (18S). The 60S subunit contains about 49 different proteins and 3 molecules of RNA (28S, 5.8S and 5S).

Its subcellular location is the cytoplasm. Essential for oogenesis; required for late follicle cell development. In Drosophila persimilis (Fruit fly), this protein is Small ribosomal subunit protein eS1.